The primary structure comprises 91 residues: Elongation factor 1-beta (91 aa).

It belongs to the EF-1-beta/EF-1-delta family.

In terms of biological role, promotes the exchange of GDP for GTP in EF-1-alpha/GDP, thus allowing the regeneration of EF-1-alpha/GTP that could then be used to form the ternary complex EF-1-alpha/GTP/AAtRNA. The polypeptide is Elongation factor 1-beta (ef1b) (Pyrococcus abyssi (strain GE5 / Orsay)).